We begin with the raw amino-acid sequence, 447 residues long: Phosphoglucosamine mutase (447 aa).

S101 serves as the catalytic Phosphoserine intermediate. Positions 101, 242, 244, and 246 each coordinate Mg(2+). S101 carries the post-translational modification Phosphoserine.

Belongs to the phosphohexose mutase family. Mg(2+) is required as a cofactor. In terms of processing, activated by phosphorylation.

It carries out the reaction alpha-D-glucosamine 1-phosphate = D-glucosamine 6-phosphate. In terms of biological role, catalyzes the conversion of glucosamine-6-phosphate to glucosamine-1-phosphate. This Methylobacterium radiotolerans (strain ATCC 27329 / DSM 1819 / JCM 2831 / NBRC 15690 / NCIMB 10815 / 0-1) protein is Phosphoglucosamine mutase.